Consider the following 333-residue polypeptide: T-cell surface glycoprotein CD1b-2 (333 aa).

A signal peptide spans methionine 1–aspartate 20. Residues valine 21–glycine 302 lie on the Extracellular side of the membrane. N-linked (GlcNAc...) asparagine glycosylation is found at asparagine 38, asparagine 75, and asparagine 146. Intrachain disulfides connect cysteine 120-cysteine 184, cysteine 149-cysteine 163, and cysteine 224-cysteine 279. Residues proline 185–tryptophan 295 enclose the Ig-like domain. A helical transmembrane segment spans residues leucine 303–phenylalanine 323. Residues tryptophan 324–leucine 333 lie on the Cytoplasmic side of the membrane. Residues tyrosine 329–isoleucine 332 carry the Internalization signal motif.

Heterodimer with B2M (beta-2-microglobulin). Interacts with saposin C.

The protein resides in the cell membrane. It is found in the endosome membrane. Its subcellular location is the lysosome membrane. Functionally, antigen-presenting protein that binds self and non-self lipid and glycolipid antigens and presents them to T-cell receptors on natural killer T-cells. This Ovis aries (Sheep) protein is T-cell surface glycoprotein CD1b-2.